The chain runs to 220 residues: UPF0319 protein YccT (220 aa).

The signal sequence occupies residues 1–20 (MKTGALATFLALCLPVTVFA).

This sequence belongs to the UPF0319 family.

This Salmonella enteritidis PT4 (strain P125109) protein is UPF0319 protein YccT.